The primary structure comprises 89 residues: Small ribosomal subunit protein uS15 (89 aa).

Belongs to the universal ribosomal protein uS15 family. Part of the 30S ribosomal subunit. Forms a bridge to the 50S subunit in the 70S ribosome, contacting the 23S rRNA.

One of the primary rRNA binding proteins, it binds directly to 16S rRNA where it helps nucleate assembly of the platform of the 30S subunit by binding and bridging several RNA helices of the 16S rRNA. Functionally, forms an intersubunit bridge (bridge B4) with the 23S rRNA of the 50S subunit in the ribosome. This chain is Small ribosomal subunit protein uS15, found in Paenarthrobacter aurescens (strain TC1).